Reading from the N-terminus, the 209-residue chain is MIAIIDYGMGNIRSVEQALKYIGTEYIITDDKKEILRSDGVILPGVGTFPKAMGVLEEKDLVCVLKEVGSLGKPLLGICLGMQLLFEKSEELQNCNGLNLLPGVIRKLKVPYKIPHMGWNELKKEGEISLWNGVEDGSFVYYVHSYYADCPNEIVYGASEYGVKVPGFVAKGNIFGAQFHPEKSGEIGMRMLKNFKGVVEAWKSSQLSI.

The Glutamine amidotransferase type-1 domain maps to M1 to S205. The Nucleophile role is filled by C79. Active-site residues include H180 and E182.

In terms of assembly, heterodimer of HisH and HisF.

Its subcellular location is the cytoplasm. The catalysed reaction is 5-[(5-phospho-1-deoxy-D-ribulos-1-ylimino)methylamino]-1-(5-phospho-beta-D-ribosyl)imidazole-4-carboxamide + L-glutamine = D-erythro-1-(imidazol-4-yl)glycerol 3-phosphate + 5-amino-1-(5-phospho-beta-D-ribosyl)imidazole-4-carboxamide + L-glutamate + H(+). It carries out the reaction L-glutamine + H2O = L-glutamate + NH4(+). Its pathway is amino-acid biosynthesis; L-histidine biosynthesis; L-histidine from 5-phospho-alpha-D-ribose 1-diphosphate: step 5/9. In terms of biological role, IGPS catalyzes the conversion of PRFAR and glutamine to IGP, AICAR and glutamate. The HisH subunit catalyzes the hydrolysis of glutamine to glutamate and ammonia as part of the synthesis of IGP and AICAR. The resulting ammonia molecule is channeled to the active site of HisF. This Bacillus mycoides (strain KBAB4) (Bacillus weihenstephanensis) protein is Imidazole glycerol phosphate synthase subunit HisH.